The following is a 156-amino-acid chain: ATP synthase subunit b (156 aa).

Residues 5–27 (ITLIGQMITFAIFVGFTMKFVWP) traverse the membrane as a helical segment.

The protein belongs to the ATPase B chain family. F-type ATPases have 2 components, F(1) - the catalytic core - and F(0) - the membrane proton channel. F(1) has five subunits: alpha(3), beta(3), gamma(1), delta(1), epsilon(1). F(0) has three main subunits: a(1), b(2) and c(10-14). The alpha and beta chains form an alternating ring which encloses part of the gamma chain. F(1) is attached to F(0) by a central stalk formed by the gamma and epsilon chains, while a peripheral stalk is formed by the delta and b chains.

It is found in the cell inner membrane. In terms of biological role, f(1)F(0) ATP synthase produces ATP from ADP in the presence of a proton or sodium gradient. F-type ATPases consist of two structural domains, F(1) containing the extramembraneous catalytic core and F(0) containing the membrane proton channel, linked together by a central stalk and a peripheral stalk. During catalysis, ATP synthesis in the catalytic domain of F(1) is coupled via a rotary mechanism of the central stalk subunits to proton translocation. Functionally, component of the F(0) channel, it forms part of the peripheral stalk, linking F(1) to F(0). In Francisella tularensis subsp. tularensis (strain WY96-3418), this protein is ATP synthase subunit b.